Reading from the N-terminus, the 135-residue chain is Interleukin-4 (135 aa).

An N-terminal signal peptide occupies residues M1–G24. 2 cysteine pairs are disulfide-bonded: C48–C85 and C70–C105. N-linked (GlcNAc...) asparagine glycans are attached at residues N62 and N96.

It belongs to the IL-4/IL-13 family.

It is found in the secreted. Participates in at least several B-cell activation processes as well as of other cell types. It is a costimulator of DNA-synthesis. It induces the expression of class II MHC molecules on resting B-cells. It enhances both secretion and cell surface expression of IgE and IgG1. It also regulates the expression of the low affinity Fc receptor for IgE (CD23) on both lymphocytes and monocytes. Positively regulates IL31RA expression in macrophages. Stimulates autophagy in dendritic cells by interfering with mTORC1 signaling and through the induction of RUFY4. The protein is Interleukin-4 (IL4) of Ovis aries (Sheep).